A 401-amino-acid chain; its full sequence is SSWWAHVEMGPPDPILGVTEAYKRDTNSKKMNLGVGAYRDDNGKPYVLPSVRKAEAQIAAKNLDKEYLPIGGLAEFCKASAELALGENSEALKSGRYVTVQSISGTGALRIGANFLQRFFKFSRDVFLPKPSWGNHTPIFRDAGLQLHAYRYYDPKTCGFDVTGALEDISKIPQQSIILLHACAHNPTGVDPRPEQWKEIATLVKKNNLFAFFDMAYQGFASGDGNKDAWAVRYFIEQGINVCLCQSYAKNMGLYGERVGAFTMVCKDADEAKRVESQLKILIRPLYSNPPLNGARIASTILTSPDLRKQWLQEVKGMADRIISMRTQLVSNLKKEGSSHSWQHIADQIGMFCFTGLKPEQVERLTKEFSIYMTKDGRISVAGVTSGNVGYLAHAIHQVTK.

Thr19 carries the post-translational modification Phosphothreonine. Lys30 carries the N6-acetyllysine modification. Residue Gly36 coordinates substrate. Position 44 is an N6-acetyllysine; alternate (Lys44). Lys44 carries the post-translational modification N6-succinyllysine; alternate. At Lys53 the chain carries N6-acetyllysine. The residue at position 61 (Lys61) is an N6-acetyllysine; alternate. Lys61 carries the N6-succinyllysine; alternate modification. Tyr67 is modified (3'-nitrotyrosine; alternate). Tyr67 is subject to Phosphotyrosine; alternate. Residues Lys78, Lys93, and Lys130 each carry the N6-acetyllysine; alternate modification. An N6-succinyllysine; alternate mark is found at Lys78, Lys93, and Lys130. A substrate-binding site is contributed by Trp133. Lys156 is subject to N6-acetyllysine; alternate. Lys156 carries the post-translational modification N6-succinyllysine; alternate. A substrate-binding site is contributed by Asn186. Lys198 bears the N6-succinyllysine mark. Lys205 is modified (N6-acetyllysine). N6-acetyllysine; alternate is present on residues Lys250 and Lys267. Lys250 bears the N6-(pyridoxal phosphate)lysine; alternate mark. Lys267 carries the N6-succinyllysine; alternate modification. Residue Lys273 is modified to N6-acetyllysine. Lys280 carries the N6-acetyllysine; alternate modification. Residue Lys280 is modified to N6-succinyllysine; alternate. Arg284 carries the post-translational modification Asymmetric dimethylarginine. N6-acetyllysine; alternate is present on Lys309. Lys309 carries the post-translational modification N6-succinyllysine; alternate. Lys316 carries the post-translational modification N6-acetyllysine. Position 334 is an N6-acetyllysine; alternate (Lys334). Position 334 is an N6-succinyllysine; alternate (Lys334). Lys335 and Lys358 each carry N6-acetyllysine. Lys367 and Lys375 each carry N6-acetyllysine; alternate. 2 positions are modified to N6-succinyllysine; alternate: Lys367 and Lys375. Arg378 is a substrate binding site.

This sequence belongs to the class-I pyridoxal-phosphate-dependent aminotransferase family. As to quaternary structure, homodimer. The cofactor is pyridoxal 5'-phosphate.

It is found in the mitochondrion matrix. It localises to the cell membrane. It carries out the reaction L-aspartate + 2-oxoglutarate = oxaloacetate + L-glutamate. The enzyme catalyses L-kynurenine + 2-oxoglutarate = kynurenate + L-glutamate + H2O. Its function is as follows. Catalyzes the irreversible transamination of the L-tryptophan metabolite L-kynurenine to form kynurenic acid (KA). As a member of the malate-aspartate shuttle, it has a key role in the intracellular NAD(H) redox balance. Is important for metabolite exchange between mitochondria and cytosol, and for amino acid metabolism. Facilitates cellular uptake of long-chain free fatty acids. The chain is Aspartate aminotransferase, mitochondrial (GOT2) from Equus caballus (Horse).